A 57-amino-acid chain; its full sequence is Large ribosomal subunit protein bL32c (57 aa).

It belongs to the bacterial ribosomal protein bL32 family.

Its subcellular location is the plastid. The protein resides in the chloroplast. The polypeptide is Large ribosomal subunit protein bL32c (Nandina domestica (Heavenly bamboo)).